We begin with the raw amino-acid sequence, 227 residues long: PKHD-type hydroxylase Patl_2273 (227 aa).

Residues 78–178 enclose the Fe2OG dioxygenase domain; sequence KIYPPKFNRY…RTASFFWIES (101 aa). Positions 96, 98, and 159 each coordinate Fe cation. Arg-169 contributes to the 2-oxoglutarate binding site.

The cofactor is Fe(2+). Requires L-ascorbate as cofactor.

This is PKHD-type hydroxylase Patl_2273 from Pseudoalteromonas atlantica (strain T6c / ATCC BAA-1087).